The sequence spans 185 residues: Ribosome-recycling factor (185 aa).

This sequence belongs to the RRF family.

The protein localises to the cytoplasm. Functionally, responsible for the release of ribosomes from messenger RNA at the termination of protein biosynthesis. May increase the efficiency of translation by recycling ribosomes from one round of translation to another. This chain is Ribosome-recycling factor, found in Streptococcus pneumoniae serotype 19F (strain G54).